We begin with the raw amino-acid sequence, 341 residues long: Anthranilate phosphoribosyltransferase (341 aa).

Residues Gly-83, 86-87, Thr-91, 93-96, 111-119, and Ser-123 contribute to the 5-phospho-alpha-D-ribose 1-diphosphate site; these read GD, NIST, and KHGNRGVSS. Gly-83 is an anthranilate binding site. Residue Ser-95 coordinates Mg(2+). Asn-114 contacts anthranilate. Arg-169 lines the anthranilate pocket. Mg(2+) contacts are provided by Asp-228 and Glu-229.

Belongs to the anthranilate phosphoribosyltransferase family. As to quaternary structure, homodimer. The cofactor is Mg(2+).

The catalysed reaction is N-(5-phospho-beta-D-ribosyl)anthranilate + diphosphate = 5-phospho-alpha-D-ribose 1-diphosphate + anthranilate. The protein operates within amino-acid biosynthesis; L-tryptophan biosynthesis; L-tryptophan from chorismate: step 2/5. In terms of biological role, catalyzes the transfer of the phosphoribosyl group of 5-phosphorylribose-1-pyrophosphate (PRPP) to anthranilate to yield N-(5'-phosphoribosyl)-anthranilate (PRA). The sequence is that of Anthranilate phosphoribosyltransferase from Cupriavidus necator (strain ATCC 17699 / DSM 428 / KCTC 22496 / NCIMB 10442 / H16 / Stanier 337) (Ralstonia eutropha).